Consider the following 647-residue polypeptide: Threonine--tRNA ligase (647 aa).

Residues 1-61 enclose the TGS domain; that stretch reads MIKITFPDGA…EEDGSIEIVT (61 aa). A catalytic region spans residues 240-538; that stretch reads DHRKLGKELD…LIETYKGAFP (299 aa). Zn(2+) contacts are provided by cysteine 334, histidine 385, and histidine 515.

This sequence belongs to the class-II aminoacyl-tRNA synthetase family. Homodimer. Zn(2+) is required as a cofactor.

The protein localises to the cytoplasm. It carries out the reaction tRNA(Thr) + L-threonine + ATP = L-threonyl-tRNA(Thr) + AMP + diphosphate + H(+). Functionally, catalyzes the attachment of threonine to tRNA(Thr) in a two-step reaction: L-threonine is first activated by ATP to form Thr-AMP and then transferred to the acceptor end of tRNA(Thr). Also edits incorrectly charged L-seryl-tRNA(Thr). This is Threonine--tRNA ligase from Streptococcus pyogenes serotype M2 (strain MGAS10270).